The primary structure comprises 398 residues: Succinate--CoA ligase [ADP-forming] subunit beta (398 aa).

Positions 9 to 254 (KALLKSYGAP…TTEEDEKEIE (246 aa)) constitute an ATP-grasp domain. ATP is bound by residues lysine 46, 53–55 (GRG), glutamate 109, alanine 112, and glutamate 117. The Mg(2+) site is built by asparagine 209 and aspartate 223. Substrate contacts are provided by residues asparagine 274 and 331–333 (GIM).

It belongs to the succinate/malate CoA ligase beta subunit family. Heterotetramer of two alpha and two beta subunits. It depends on Mg(2+) as a cofactor.

The catalysed reaction is succinate + ATP + CoA = succinyl-CoA + ADP + phosphate. The enzyme catalyses GTP + succinate + CoA = succinyl-CoA + GDP + phosphate. It participates in carbohydrate metabolism; tricarboxylic acid cycle; succinate from succinyl-CoA (ligase route): step 1/1. Functionally, succinyl-CoA synthetase functions in the citric acid cycle (TCA), coupling the hydrolysis of succinyl-CoA to the synthesis of either ATP or GTP and thus represents the only step of substrate-level phosphorylation in the TCA. The beta subunit provides nucleotide specificity of the enzyme and binds the substrate succinate, while the binding sites for coenzyme A and phosphate are found in the alpha subunit. This chain is Succinate--CoA ligase [ADP-forming] subunit beta, found in Sinorhizobium medicae (strain WSM419) (Ensifer medicae).